The following is a 472-amino-acid chain: Eukaryotic translation initiation factor 2 subunit 3 (472 aa).

Residues 39 to 247 (QATINIGTIG…YIVNKIPVPV (209 aa)) enclose the tr-type G domain. Residues 48–55 (GHVAHGKS) form a G1 region. 51 to 56 (AHGKST) is a GTP binding site. The segment at 76–80 (NITIK) is G2. Residues 134-137 (DCPG) form a G3 region. GTP is bound by residues 190–193 (NKID) and 225–227 (SAQ). The interval 190 to 193 (NKID) is G4. The interval 225 to 227 (SAQ) is G5. Residues 457–469 (GQIRRGVTITPTV) are interacts with cdc123.

This sequence belongs to the TRAFAC class translation factor GTPase superfamily. Classic translation factor GTPase family. EIF2G subfamily. Eukaryotic translation initiation factor 2 eIF2 is a heterotrimeric complex composed of an alpha (EIF2S1), a beta (EIF2S2) and a gamma (EIF2S3) chain. eIF2 is member of the 43S pre-initiation complex (43S PIC).

It localises to the cytoplasm. Its subcellular location is the cytosol. The enzyme catalyses GTP + H2O = GDP + phosphate + H(+). In terms of biological role, member of the eIF2 complex that functions in the early steps of protein synthesis by forming a ternary complex with GTP and initiator tRNA. This complex binds to a 40S ribosomal subunit, followed by mRNA binding to form the 43S pre-initiation complex (43S PIC). Junction of the 60S ribosomal subunit to form the 80S initiation complex is preceded by hydrolysis of the GTP bound to eIF2 and release of an eIF2-GDP binary complex. In order for eIF2 to recycle and catalyze another round of initiation, the GDP bound to eIF2 must exchange with GTP by way of a reaction catalyzed by eIF-2B. The protein is Eukaryotic translation initiation factor 2 subunit 3 of Danio rerio (Zebrafish).